We begin with the raw amino-acid sequence, 330 residues long: Ketol-acid reductoisomerase (NADP(+)) (330 aa).

Residues 2-181 form the KARI N-terminal Rossmann domain; that stretch reads MEKYHETDAD…GATRAVVLET (180 aa). NADP(+)-binding positions include 25–28, R48, S52, and 82–85; these read YGSQ and DENQ. H107 is a catalytic residue. G133 contributes to the NADP(+) binding site. Residues 182–327 enclose the KARI C-terminal knotted domain; it reads TFREETETDL…SELRAMMPQF (146 aa). Positions 190, 194, 226, and 230 each coordinate Mg(2+). S251 contacts substrate.

It belongs to the ketol-acid reductoisomerase family. Requires Mg(2+) as cofactor.

It catalyses the reaction (2R)-2,3-dihydroxy-3-methylbutanoate + NADP(+) = (2S)-2-acetolactate + NADPH + H(+). It carries out the reaction (2R,3R)-2,3-dihydroxy-3-methylpentanoate + NADP(+) = (S)-2-ethyl-2-hydroxy-3-oxobutanoate + NADPH + H(+). Its pathway is amino-acid biosynthesis; L-isoleucine biosynthesis; L-isoleucine from 2-oxobutanoate: step 2/4. It participates in amino-acid biosynthesis; L-valine biosynthesis; L-valine from pyruvate: step 2/4. Functionally, involved in the biosynthesis of branched-chain amino acids (BCAA). Catalyzes an alkyl-migration followed by a ketol-acid reduction of (S)-2-acetolactate (S2AL) to yield (R)-2,3-dihydroxy-isovalerate. In the isomerase reaction, S2AL is rearranged via a Mg-dependent methyl migration to produce 3-hydroxy-3-methyl-2-ketobutyrate (HMKB). In the reductase reaction, this 2-ketoacid undergoes a metal-dependent reduction by NADPH to yield (R)-2,3-dihydroxy-isovalerate. This chain is Ketol-acid reductoisomerase (NADP(+)), found in Methanocorpusculum labreanum (strain ATCC 43576 / DSM 4855 / Z).